The sequence spans 1077 residues: Carbamoyl phosphate synthase large chain (1077 aa).

Residues 1-403 (MPKRTDIQSI…SLHKALRGLE (403 aa)) form a carboxyphosphate synthetic domain region. Residues Arg129, Arg169, Gly175, Gly176, Glu208, Leu210, Glu215, Gly241, Ile242, His243, Gln285, and Glu299 each contribute to the ATP site. The 196-residue stretch at 133–328 (DKAMKSIGLE…IAKIAAKLAV (196 aa)) folds into the ATP-grasp 1 domain. Mg(2+) contacts are provided by Gln285, Glu299, and Asn301. The Mn(2+) site is built by Gln285, Glu299, and Asn301. The segment at 404–553 (VGATGFDEMV…YSSYDEECEA (150 aa)) is oligomerization domain. Residues 554–935 (NPTDKDKIMV…AYAKAELGCG (382 aa)) form a carbamoyl phosphate synthetic domain region. An ATP-grasp 2 domain is found at 678-869 (QAAVERLGLL…LAKIAARVMA (192 aa)). Residues Arg714, Arg753, Leu755, Glu760, Gly785, Val786, His787, Ser788, Gln828, and Glu840 each contribute to the ATP site. 3 residues coordinate Mg(2+): Gln828, Glu840, and Asn842. Gln828, Glu840, and Asn842 together coordinate Mn(2+). In terms of domain architecture, MGS-like spans 936-1077 (SVYPEGGRAL…HAKVKASLEA (142 aa)). An allosteric domain region spans residues 936 to 1077 (SVYPEGGRAL…HAKVKASLEA (142 aa)).

It belongs to the CarB family. Composed of two chains; the small (or glutamine) chain promotes the hydrolysis of glutamine to ammonia, which is used by the large (or ammonia) chain to synthesize carbamoyl phosphate. Tetramer of heterodimers (alpha,beta)4. Mg(2+) is required as a cofactor. Requires Mn(2+) as cofactor.

It carries out the reaction hydrogencarbonate + L-glutamine + 2 ATP + H2O = carbamoyl phosphate + L-glutamate + 2 ADP + phosphate + 2 H(+). The enzyme catalyses hydrogencarbonate + NH4(+) + 2 ATP = carbamoyl phosphate + 2 ADP + phosphate + 2 H(+). The protein operates within amino-acid biosynthesis; L-arginine biosynthesis; carbamoyl phosphate from bicarbonate: step 1/1. It functions in the pathway pyrimidine metabolism; UMP biosynthesis via de novo pathway; (S)-dihydroorotate from bicarbonate: step 1/3. Large subunit of the glutamine-dependent carbamoyl phosphate synthetase (CPSase). CPSase catalyzes the formation of carbamoyl phosphate from the ammonia moiety of glutamine, carbonate, and phosphate donated by ATP, constituting the first step of 2 biosynthetic pathways, one leading to arginine and/or urea and the other to pyrimidine nucleotides. The large subunit (synthetase) binds the substrates ammonia (free or transferred from glutamine from the small subunit), hydrogencarbonate and ATP and carries out an ATP-coupled ligase reaction, activating hydrogencarbonate by forming carboxy phosphate which reacts with ammonia to form carbamoyl phosphate. The chain is Carbamoyl phosphate synthase large chain from Vibrio parahaemolyticus serotype O3:K6 (strain RIMD 2210633).